An 851-amino-acid chain; its full sequence is Internalin J (851 aa).

A signal peptide spans 1–25 (MKTTKIVIASLVSLTMVSNPLLTFA). LRR repeat units lie at residues 94 to 115 (TLTSLDCHNSSITDMTGIEKLT), 116 to 136 (GLTKLICTSNNITTLDLSQNT), 137 to 157 (NLTYLACDSNKLTNLDVTPLT), 158 to 179 (KLTYLNCDTNKLTKLDVSQNPL), 180 to 200 (LTYLNCARNTLTEIDVSHNTQ), 201 to 221 (LTELDCHLNKKITKLDVTPQT), 222 to 243 (QLTTLDCSFNKITELDVSQNKL), 244 to 263 (LNRLNCDTNNITKLDLNQNI), 264 to 284 (QLTFLDCSSNKLTEIDVTPLT), 285 to 306 (QLTYFDCSVNPLTELDVSTLSK), 316 to 325 (DLLEIDLTHN), 338 to 357 (KIKELDVTHNTQLYLLDCQA), 359 to 368 (GITELDLSQN), and 380 to 402 (ELTELDVSHNTKLKSLSCVNAHI). MucBP domains are found at residues 506–568 (PIKG…SQSV), 576–638 (IVAA…AQTV), 647–709 (APEK…SQTV), and 717–779 (IEAA…AQTV). The segment at 786-825 (NTNTDQPLPTKKPTNTTPTKPSNLKTTEVKKASDTLPKTG) is disordered. The span at 792–811 (PLPTKKPTNTTPTKPSNLKT) shows a compositional bias: low complexity. An LPXTG sorting signal motif is present at residues 821–825 (LPKTG). At threonine 824 the chain carries Pentaglycyl murein peptidoglycan amidated threonine. Positions 825-851 (GDSAPWKSALLGVFLSSTALVIWKKKK) are cleaved as a propeptide — removed by sortase A.

The protein belongs to the internalin family. In terms of assembly, nearly full-length mature protein and an internal LRR-containing fragment interact in vitro with human intestinal mucin-2 (MUC2) but not with mucin-1. LRR fragment binding is slightly better at pH 5.5, (the pH of the intestine) than at pH 7.4.

It localises to the secreted. It is found in the cell wall. Despite being transcribed during bacterial growth in culture the protein is only detected in infected mice. In terms of biological role, involved in several steps of L.monocytogenes infection by both intravenous and oral infection. Probably acts as an adhesion; upon ectopic expression in L.innocula bacteria adhere better to human cell lines. This Listeria monocytogenes serovar 1/2a (strain ATCC BAA-679 / EGD-e) protein is Internalin J (inlJ).